Reading from the N-terminus, the 242-residue chain is Small ribosomal subunit protein uS2 (242 aa).

Belongs to the universal ribosomal protein uS2 family.

In Neisseria meningitidis serogroup B (strain ATCC BAA-335 / MC58), this protein is Small ribosomal subunit protein uS2.